A 160-amino-acid chain; its full sequence is NADH-quinone oxidoreductase subunit B (160 aa).

[4Fe-4S] cluster contacts are provided by Cys-37, Cys-38, Cys-102, and Cys-132.

This sequence belongs to the complex I 20 kDa subunit family. NDH-1 is composed of 14 different subunits. Subunits NuoB, C, D, E, F, and G constitute the peripheral sector of the complex. The cofactor is [4Fe-4S] cluster.

The protein localises to the cell inner membrane. The enzyme catalyses a quinone + NADH + 5 H(+)(in) = a quinol + NAD(+) + 4 H(+)(out). Functionally, NDH-1 shuttles electrons from NADH, via FMN and iron-sulfur (Fe-S) centers, to quinones in the respiratory chain. Couples the redox reaction to proton translocation (for every two electrons transferred, four hydrogen ions are translocated across the cytoplasmic membrane), and thus conserves the redox energy in a proton gradient. The sequence is that of NADH-quinone oxidoreductase subunit B from Cupriavidus pinatubonensis (strain JMP 134 / LMG 1197) (Cupriavidus necator (strain JMP 134)).